The sequence spans 399 residues: S-adenosylmethionine synthase (399 aa).

Residue His-15 participates in ATP binding. Asp-17 provides a ligand contact to Mg(2+). Glu-43 is a K(+) binding site. The L-methionine site is built by Glu-56 and Gln-99. Positions 99-109 (QSPDIADGVDH) are flexible loop. Residues 175-177 (DAK), 242-243 (RF), Asp-251, 257-258 (RK), Ala-274, and Lys-278 each bind ATP. Residue Asp-251 coordinates L-methionine. L-methionine is bound at residue Lys-282.

It belongs to the AdoMet synthase family. As to quaternary structure, homotetramer; dimer of dimers. The cofactor is Mg(2+). K(+) is required as a cofactor.

The protein resides in the cytoplasm. The enzyme catalyses L-methionine + ATP + H2O = S-adenosyl-L-methionine + phosphate + diphosphate. The protein operates within amino-acid biosynthesis; S-adenosyl-L-methionine biosynthesis; S-adenosyl-L-methionine from L-methionine: step 1/1. Functionally, catalyzes the formation of S-adenosylmethionine (AdoMet) from methionine and ATP. The overall synthetic reaction is composed of two sequential steps, AdoMet formation and the subsequent tripolyphosphate hydrolysis which occurs prior to release of AdoMet from the enzyme. This chain is S-adenosylmethionine synthase, found in Lactobacillus acidophilus (strain ATCC 700396 / NCK56 / N2 / NCFM).